Reading from the N-terminus, the 319-residue chain is tRNA U34 carboxymethyltransferase (319 aa).

Residues K88, W102, K107, G126, 176 to 177 (LE), M192, Y196, and R311 contribute to the carboxy-S-adenosyl-L-methionine site.

Belongs to the class I-like SAM-binding methyltransferase superfamily. CmoB family. Homotetramer.

The catalysed reaction is carboxy-S-adenosyl-L-methionine + 5-hydroxyuridine(34) in tRNA = 5-carboxymethoxyuridine(34) in tRNA + S-adenosyl-L-homocysteine + H(+). In terms of biological role, catalyzes carboxymethyl transfer from carboxy-S-adenosyl-L-methionine (Cx-SAM) to 5-hydroxyuridine (ho5U) to form 5-carboxymethoxyuridine (cmo5U) at position 34 in tRNAs. The protein is tRNA U34 carboxymethyltransferase of Pseudomonas syringae pv. tomato (strain ATCC BAA-871 / DC3000).